A 311-amino-acid polypeptide reads, in one-letter code: Malate dehydrogenase (311 aa).

NAD(+)-binding positions include 7–13 (GAAGGIG) and Asp34. The substrate site is built by Arg81 and Arg87. NAD(+)-binding positions include Asn94 and 117–119 (ITN). Residues Asn119 and Arg153 each coordinate substrate. The active-site Proton acceptor is the His177. Residue Met227 coordinates NAD(+).

Belongs to the LDH/MDH superfamily. MDH type 1 family. In terms of assembly, homodimer.

It carries out the reaction (S)-malate + NAD(+) = oxaloacetate + NADH + H(+). Its function is as follows. Catalyzes the reversible oxidation of malate to oxaloacetate. In Pseudoalteromonas atlantica (strain T6c / ATCC BAA-1087), this protein is Malate dehydrogenase.